We begin with the raw amino-acid sequence, 367 residues long: Succinyl-diaminopimelate desuccinylase (367 aa).

H64 is a binding site for Zn(2+). D66 is an active-site residue. D95 contributes to the Zn(2+) binding site. Catalysis depends on E125, which acts as the Proton acceptor. Zn(2+) contacts are provided by E126, E154, and H339.

This sequence belongs to the peptidase M20A family. DapE subfamily. In terms of assembly, homodimer. It depends on Zn(2+) as a cofactor. Co(2+) is required as a cofactor.

It carries out the reaction N-succinyl-(2S,6S)-2,6-diaminopimelate + H2O = (2S,6S)-2,6-diaminopimelate + succinate. It functions in the pathway amino-acid biosynthesis; L-lysine biosynthesis via DAP pathway; LL-2,6-diaminopimelate from (S)-tetrahydrodipicolinate (succinylase route): step 3/3. Functionally, catalyzes the hydrolysis of N-succinyl-L,L-diaminopimelic acid (SDAP), forming succinate and LL-2,6-diaminopimelate (DAP), an intermediate involved in the bacterial biosynthesis of lysine and meso-diaminopimelic acid, an essential component of bacterial cell walls. The protein is Succinyl-diaminopimelate desuccinylase of Sulfurovum sp. (strain NBC37-1).